The chain runs to 384 residues: Galactokinase (384 aa).

34–37 (EHTD) is a substrate binding site. 123 to 129 (SSGLSSS) provides a ligand contact to ATP. The Mg(2+) site is built by Ser129 and Glu161. Asp173 serves as the catalytic Proton acceptor. Tyr222 serves as a coordination point for substrate.

Belongs to the GHMP kinase family. GalK subfamily.

It is found in the cytoplasm. The catalysed reaction is alpha-D-galactose + ATP = alpha-D-galactose 1-phosphate + ADP + H(+). It participates in carbohydrate metabolism; galactose metabolism. Functionally, catalyzes the transfer of the gamma-phosphate of ATP to D-galactose to form alpha-D-galactose-1-phosphate (Gal-1-P). In Actinobacillus pleuropneumoniae serotype 5b (strain L20), this protein is Galactokinase.